Consider the following 208-residue polypeptide: Small ribosomal subunit protein uS4 (208 aa).

An S4 RNA-binding domain is found at 95-159; sequence TIIDNIVYRA…LKKLIGSNIE (65 aa).

Belongs to the universal ribosomal protein uS4 family. As to quaternary structure, part of the 30S ribosomal subunit. Contacts protein S5. The interaction surface between S4 and S5 is involved in control of translational fidelity.

Its function is as follows. One of the primary rRNA binding proteins, it binds directly to 16S rRNA where it nucleates assembly of the body of the 30S subunit. With S5 and S12 plays an important role in translational accuracy. The chain is Small ribosomal subunit protein uS4 from Borreliella afzelii (strain PKo) (Borrelia afzelii).